We begin with the raw amino-acid sequence, 260 residues long: Kallikrein-8 (260 aa).

Positions 1–28 (MGRPPPCAIQPWILLLLFMGAWAGLTRA) are cleaved as a signal peptide. The propeptide occupies 29-32 (QGSK). Residues 33-257 (ILEGRECIPH…YTTWIKKTMD (225 aa)) enclose the Peptidase S1 domain. Disulfide bonds link Cys-39-Cys-173, Cys-58-Cys-74, Cys-145-Cys-246, Cys-152-Cys-218, Cys-184-Cys-198, and Cys-208-Cys-233. The Charge relay system role is filled by His-73. The N-linked (GlcNAc...) asparagine glycan is linked to Asn-110. Residue Asp-120 is the Charge relay system of the active site. The active-site Charge relay system is the Ser-212.

Belongs to the peptidase S1 family. Kallikrein subfamily. In terms of assembly, interacts with SPINK9. In terms of tissue distribution, expressed in the limbic system of mouse brain and is localized at highest concentration in pyramidal neurons of the hippocampal CA1-3 subfields. Also detected in spinal cord gray matter and in keratinized stratified epithelia of epidermis, hair, tongue, palate, nasal cavity, pharynges, esophagus and forestomach. In skin and mucus membranes, expressed in stratum spinosum and stratum granulosum. Expressed during estrus in vaginal epithelial cells but not stromal cells. Within the vaginal epithelium, expressed in prickle cells, granular cells and parakeratotic cells but not in basal cells. Not expressed in uterus. Expressed in the keratinocytes.

The protein resides in the secreted. Its subcellular location is the cytoplasm. The enzyme catalyses Cleavage of amide substrates following the basic amino acids Arg or Lys at the P1 position, with a preference for Arg over Lys.. Its activity is regulated as follows. Strongly inhibited by diisopropyl fluorophosphate, leupeptin and (4-amidinophenyl)methanesulfonyl 1-fluoride. In terms of biological role, serine protease which is capable of degrading a number of proteins such as casein, fibrinogen, kininogen, fibronectin and collagen type IV. Also cleaves L1CAM in response to increased neural activity. Induces neurite outgrowth and fasciculation of cultured hippocampal neurons. Plays a role in the formation and maturation of orphan and small synaptic boutons in the Schaffer-collateral pathway, regulates Schaffer-collateral long-term potentiation in the hippocampus and is required for memory acquisition and synaptic plasticity. Involved in skin desquamation and keratinocyte proliferation. Plays a role in the secondary phase of pathogenesis following spinal cord injury. The polypeptide is Kallikrein-8 (Klk8) (Mus musculus (Mouse)).